The chain runs to 513 residues: Zinc finger CCCH-type with G patch domain-containing protein (513 aa).

The C3H1-type zinc-finger motif lies at 155–178; it reads PCSYYLEGECRFDEAKCRFSHGAL. 2 stretches are compositionally biased toward acidic residues: residues 252 to 261 and 273 to 283; these read DQDEDDELSS and SDEAESDMDDL. Positions 252 to 283 are disordered; that stretch reads DQDEDDELSSEESTSSMRDASSDEAESDMDDL. A G-patch domain is found at 312-358; the sequence is TRGIGSKLMEKMGYIHGTGLGSDGRGIVTPVSAQILPQGRSLDACME. Over residues 477 to 495 the composition is skewed to polar residues; it reads QVQMQSHKQELATLQAQER. Residues 477–513 form a disordered region; that stretch reads QVQMQSHKQELATLQAQERSLSKEQQTRKSKNKMFEF. Basic and acidic residues predominate over residues 496 to 513; that stretch reads SLSKEQQTRKSKNKMFEF.

It is found in the nucleus. Its function is as follows. Transcription repressor. The sequence is that of Zinc finger CCCH-type with G patch domain-containing protein from Drosophila simulans (Fruit fly).